The primary structure comprises 25 residues: Nicotinic acetylcholine receptor-binding protein Mnn-4 (25 aa).

A disulfide bridge connects residues Cys-3 and Cys-20.

The protein belongs to the three-finger toxin family. Short-chain subfamily. As to expression, expressed by the venom gland.

Its subcellular location is the secreted. Its function is as follows. Binds and may inhibit nicotinic acetylcholine receptors (nAChR). This is Nicotinic acetylcholine receptor-binding protein Mnn-4 from Micrurus nigrocinctus (Central American coral snake).